Consider the following 619-residue polypeptide: Alpha-L-arabinofuranosidase C (619 aa).

The N-terminal stretch at 1 to 37 is a signal peptide; it reads MINHNKTPNILAKVFKRTCGLVSTGAALAILSQAASA. The CBM2 domain maps to 38–136; that stretch reads ACTYTIDSEW…TVTGAACNSA (99 aa). The cysteines at positions 39 and 133 are disulfide-linked. Residues 163-289 form the CBM6 domain; the sequence is LLQEAQAGFC…LPNIDSLSVV (127 aa). The disordered stretch occupies residues 300 to 319; it reads SVSSSSSVQSSSSSSSTPSQ.

This sequence belongs to the glycosyl hydrolase 62 family.

Its subcellular location is the secreted. It catalyses the reaction Hydrolysis of terminal non-reducing alpha-L-arabinofuranoside residues in alpha-L-arabinosides.. Its pathway is glycan metabolism; hemicellulose degradation. Its function is as follows. Xylanase C contributes to hydrolyze hemicellulose, the major component of plant cell-walls. The sequence is that of Alpha-L-arabinofuranosidase C (xynC) from Cellvibrio japonicus (strain Ueda107) (Pseudomonas fluorescens subsp. cellulosa).